Reading from the N-terminus, the 396-residue chain is Putative carbamoyltransferase YgeW (396 aa).

Carbamoyl phosphate contacts are provided by residues 71 to 74 (STRT), Gln-98, 165 to 168 (HPTQ), and 330 to 331 (CL).

Belongs to the aspartate/ornithine carbamoyltransferase superfamily. In terms of assembly, homotrimer.

In Escherichia coli O157:H7, this protein is Putative carbamoyltransferase YgeW (ygeW).